A 424-amino-acid chain; its full sequence is Histidine--tRNA ligase (424 aa).

This sequence belongs to the class-II aminoacyl-tRNA synthetase family. As to quaternary structure, homodimer.

The protein localises to the cytoplasm. It catalyses the reaction tRNA(His) + L-histidine + ATP = L-histidyl-tRNA(His) + AMP + diphosphate + H(+). The chain is Histidine--tRNA ligase from Escherichia coli (strain SE11).